The sequence spans 504 residues: FAD-dependent monooxygenase nsrK (504 aa).

FAD is bound at residue arginine 146. Residue arginine 227 is part of the active site. FAD is bound by residues aspartate 340 and glycine 353.

Belongs to the paxM FAD-dependent monooxygenase family. FAD is required as a cofactor.

The protein operates within secondary metabolite biosynthesis. FAD-dependent monooxygenase; part of the gene cluster that mediates the biosynthesis of the tetrahydroxanthone dimer neosartorin, which exhibits antibacterial activity. The two different monomeric units appear to be synthesized by the same set of enzymes, among which the Baeyer-Villiger monooxygenase nsrF is the key enzyme for the divergence of the biosynthetic routes. The pathway begins with the synthesis of atrochrysone thioester by the polyketide synthase nsrB. The atrochrysone carboxyl ACP thioesterase nsrC then breaks the thioester bond and releases the atrochrysone carboxylic acid from AacuL. Atrochrysone carboxylic acid is decarboxylated by the decarboxylase nsrE, and oxidized by the anthrone oxygenase nsrD to yield emodin. Emodin is then reduced to emodin hydroquinone by the oxidoreductase nsrR. A-ring reduction by the short chain dehydrogenase nsrJ, dehydration by the scytalone dehydratase-like protein nsrI and probable spontaneous re-oxidation, results in overall deoxygenation to chrysophanol. The Baeyer-Villiger monooxygenase nsrF accepts chrysophanol as a substrate to insert one oxygen atom at two different positions to yield the precursors of both monomric units. NsrF is promiscuous/flexible in interacting with the 2 (non methylated and methylated) aromatic rings of chrysophanol, thus diverging the biosynthetic pathway at this point. After the hydrolysis of the lactones, methylesterification by the methyltransferase nsrG yields respectively moniliphenone and 2,2',6'-trihydroxy-4-methyl-6-methoxya-cyldiphenylmethanone. The next steps are the hydroxylation by the FAD-dependent monooxygenase nsrK, followed by isomerization by the monooxygenase nsrQ. The short chain dehydrogenase/reductase nsrO then catalyzes the C-5 ketoreduction to give the xanthone skeleton of blennolide C and 5-acetylblennolide A. The acetyltransferase nsrL has a strict substrate specificity and uses only blennolide A but not blennolide C to yield 5-acetylblennolide A as the single-acetylated product. In the final step of the biosynthesis, the heterodimerization of the 2 xanthones, blennolide C and 5-acetylblennolide A, is catalyzed by the cytochrome P450 monooxygenase nsrP. NsrP can utilize at least three different xanthones as its substrates to perform the dimerization reaction. In Aspergillus novofumigatus (strain IBT 16806), this protein is FAD-dependent monooxygenase nsrK.